Consider the following 236-residue polypeptide: Translocon-associated protein subunit alpha (236 aa).

Residues Met1–Ser20 form the signal peptide. The Lumenal portion of the chain corresponds to Asp21–Asp163. 5 N-linked (GlcNAc...) asparagine glycosylation sites follow: Asn74, Asn94, Asn141, Asn148, and Asn152. A helical membrane pass occupies residues Ser164–Gly184. Residues Lys185 to Lys236 are Cytoplasmic-facing.

It belongs to the TRAP-alpha family. In terms of assembly, heterotrimer of TRAP-alpha, TRAP-beta and TRAP-gamma. Post-translationally, phosphorylated in its cytoplasmic tail.

It is found in the endoplasmic reticulum membrane. Functionally, TRAP proteins are part of a complex whose function is to bind calcium to the ER membrane and thereby regulate the retention of ER resident proteins. This is Translocon-associated protein subunit alpha (ssr1) from Dictyostelium discoideum (Social amoeba).